A 396-amino-acid polypeptide reads, in one-letter code: Elongation factor Tu (396 aa).

Positions lysine 10–glutamate 206 constitute a tr-type G domain. The tract at residues glycine 19–threonine 26 is G1. Position 19-26 (glycine 19–threonine 26) interacts with GTP. Threonine 26 serves as a coordination point for Mg(2+). The tract at residues glycine 60–asparagine 64 is G2. A G3 region spans residues aspartate 81 to glycine 84. Residues aspartate 81 to histidine 85 and asparagine 136 to aspartate 139 contribute to the GTP site. Residues asparagine 136–aspartate 139 are G4. Residues serine 174–lysine 176 are G5.

Belongs to the TRAFAC class translation factor GTPase superfamily. Classic translation factor GTPase family. EF-Tu/EF-1A subfamily. Monomer.

It is found in the cytoplasm. The enzyme catalyses GTP + H2O = GDP + phosphate + H(+). Its function is as follows. GTP hydrolase that promotes the GTP-dependent binding of aminoacyl-tRNA to the A-site of ribosomes during protein biosynthesis. The polypeptide is Elongation factor Tu (Herminiimonas arsenicoxydans).